The chain runs to 246 residues: Probable S-methyl-5'-thioinosine phosphorylase (246 aa).

Phosphate is bound by residues Thr10 and 52-53 (RH). Met185 serves as a coordination point for substrate. Position 186 (Thr186) interacts with phosphate. A substrate-binding site is contributed by 209 to 211 (NPA).

This sequence belongs to the PNP/MTAP phosphorylase family. MTAP subfamily. In terms of assembly, homotrimer.

The catalysed reaction is S-methyl-5'-thioinosine + phosphate = 5-(methylsulfanyl)-alpha-D-ribose 1-phosphate + hypoxanthine. The protein operates within purine metabolism; purine nucleoside salvage. Catalyzes the reversible phosphorylation of S-methyl-5'-thioinosine (MTI) to hypoxanthine and 5-methylthioribose-1-phosphate. Involved in the breakdown of S-methyl-5'-thioadenosine (MTA), a major by-product of polyamine biosynthesis. Catabolism of (MTA) occurs via deamination to MTI and phosphorolysis to hypoxanthine. The polypeptide is Probable S-methyl-5'-thioinosine phosphorylase (Pseudomonas syringae pv. tomato (strain ATCC BAA-871 / DC3000)).